We begin with the raw amino-acid sequence, 126 residues long: Histone H2B type 3-B (126 aa).

Residues 1–12 (MPDPSKSAPAPK) show a composition bias toward low complexity. The tract at residues 1-35 (MPDPSKSAPAPKKGSKKAVTKAQKKDGKKRKRGRK) is disordered. Proline 2 bears the N-acetylproline mark. Lysine 6 is modified (N6-(2-hydroxyisobutyryl)lysine; alternate). N6-(beta-hydroxybutyryl)lysine; alternate is present on lysine 6. At lysine 6 the chain carries N6-acetyllysine; alternate. Lysine 6 is subject to N6-butyryllysine; alternate. Residue lysine 6 is modified to N6-crotonyllysine; alternate. Residue lysine 6 is modified to N6-lactoyllysine; alternate. Lysine 6 is covalently cross-linked (Glycyl lysine isopeptide (Lys-Gly) (interchain with G-Cter in SUMO2); alternate). Serine 7 is subject to ADP-ribosylserine. N6-(beta-hydroxybutyryl)lysine; alternate is present on lysine 12. An N6-acetyllysine; alternate mark is found at lysine 12 and lysine 13. Residues lysine 12 and lysine 13 each carry the N6-crotonyllysine; alternate modification. Lysine 12 carries the post-translational modification N6-lactoyllysine; alternate. Lysine 13 is subject to N6-(2-hydroxyisobutyryl)lysine; alternate. Serine 15 carries the phosphoserine; by STK4/MST1 modification. An N6-acetyllysine; alternate mark is found at lysine 16, lysine 17, lysine 21, and lysine 24. An N6-crotonyllysine; alternate mark is found at lysine 16, lysine 17, lysine 21, and lysine 24. An N6-lactoyllysine; alternate mark is found at lysine 16, lysine 17, lysine 21, and lysine 24. An N6-(beta-hydroxybutyryl)lysine; alternate mark is found at lysine 17 and lysine 21. The residue at position 17 (lysine 17) is an N6-glutaryllysine; alternate. N6-(2-hydroxyisobutyryl)lysine; alternate occurs at positions 21 and 24. The residue at position 21 (lysine 21) is an N6-butyryllysine; alternate. Residue lysine 21 forms a Glycyl lysine isopeptide (Lys-Gly) (interchain with G-Cter in SUMO2); alternate linkage. N6-(2-hydroxyisobutyryl)lysine is present on lysine 25. Position 35 is an N6-(2-hydroxyisobutyryl)lysine; alternate (lysine 35). Position 35 is an N6-(beta-hydroxybutyryl)lysine; alternate (lysine 35). At lysine 35 the chain carries N6-crotonyllysine; alternate. N6-glutaryllysine; alternate is present on lysine 35. Position 35 is an N6-succinyllysine; alternate (lysine 35). Residue lysine 35 forms a Glycyl lysine isopeptide (Lys-Gly) (interchain with G-Cter in ubiquitin); alternate linkage. Glutamate 36 is subject to PolyADP-ribosyl glutamic acid. Serine 37 carries the post-translational modification Phosphoserine; by AMPK. N6-(2-hydroxyisobutyryl)lysine; alternate is present on residues lysine 44, lysine 47, and lysine 58. An N6-lactoyllysine; alternate modification is found at lysine 44. 2 positions are modified to N6-glutaryllysine; alternate: lysine 44 and lysine 47. Lysine 47 carries the N6-methyllysine; alternate modification. Lysine 58 bears the N6,N6-dimethyllysine; alternate mark. Arginine 80 bears the Dimethylated arginine mark. Position 86 is an N6-(2-hydroxyisobutyryl)lysine; alternate (lysine 86). The residue at position 86 (lysine 86) is an N6-(beta-hydroxybutyryl)lysine; alternate. Lysine 86 is modified (N6-acetyllysine; alternate). Lysine 86 is subject to N6-lactoyllysine; alternate. Lysine 86 is subject to N6,N6,N6-trimethyllysine; alternate. Arginine 87 and arginine 93 each carry omega-N-methylarginine. Lysine 109 bears the N6-(2-hydroxyisobutyryl)lysine; alternate mark. Position 109 is an N6-lactoyllysine; alternate (lysine 109). N6-glutaryllysine; alternate is present on lysine 109. At lysine 109 the chain carries N6-methyllysine; alternate. An O-linked (GlcNAc) serine glycan is attached at serine 113. The residue at position 116 (threonine 116) is a Phosphothreonine. N6-(2-hydroxyisobutyryl)lysine; alternate occurs at positions 117 and 121. Residues lysine 117 and lysine 121 each carry the N6-(beta-hydroxybutyryl)lysine; alternate modification. An N6-lactoyllysine; alternate mark is found at lysine 117 and lysine 121. Lysine 117 and lysine 121 each carry N6-glutaryllysine; alternate. 2 positions are modified to N6-succinyllysine; alternate: lysine 117 and lysine 121. At lysine 117 the chain carries N6-malonyllysine; alternate. Lysine 117 is subject to N6-methylated lysine; alternate. Lysine 121 is covalently cross-linked (Glycyl lysine isopeptide (Lys-Gly) (interchain with G-Cter in ubiquitin); alternate).

The protein belongs to the histone H2B family. The nucleosome is a histone octamer containing two molecules each of H2A, H2B, H3 and H4 assembled in one H3-H4 heterotetramer and two H2A-H2B heterodimers. The octamer wraps approximately 147 bp of DNA. In terms of processing, monoubiquitination at Lys-35 (H2BK34Ub) by the MSL1/MSL2 dimer is required for histone H3 'Lys-4' (H3K4me) and 'Lys-79' (H3K79me) methylation and transcription activation at specific gene loci, such as HOXA9 and MEIS1 loci. Similarly, monoubiquitination at Lys-121 (H2BK120Ub) by the RNF20/40 complex gives a specific tag for epigenetic transcriptional activation and is also prerequisite for histone H3 'Lys-4' and 'Lys-79' methylation. It also functions cooperatively with the FACT dimer to stimulate elongation by RNA polymerase II. H2BK120Ub also acts as a regulator of mRNA splicing: deubiquitination by USP49 is required for efficient cotranscriptional splicing of a large set of exons. Post-translationally, phosphorylation at Ser-37 (H2BS36ph) by AMPK in response to stress promotes transcription. Phosphorylated on Ser-15 (H2BS14ph) by STK4/MST1 during apoptosis; which facilitates apoptotic chromatin condensation. Also phosphorylated on Ser-15 in response to DNA double strand breaks (DSBs), and in correlation with somatic hypermutation and immunoglobulin class-switch recombination. GlcNAcylation at Ser-113 promotes monoubiquitination of Lys-121. It fluctuates in response to extracellular glucose, and associates with transcribed genes. In terms of processing, ADP-ribosylated by PARP1 or PARP2 on Ser-7 (H2BS6ADPr) in response to DNA damage. H2BS6ADPr promotes recruitment of CHD1L. Poly ADP-ribosylation on Glu-36 (H2BE35ADPr) by PARP1 regulates adipogenesis: it inhibits phosphorylation at Ser-37 (H2BS36ph), thereby blocking expression of pro-adipogenetic genes. Post-translationally, crotonylation (Kcr) is specifically present in male germ cells and marks testis-specific genes in post-meiotic cells, including X-linked genes that escape sex chromosome inactivation in haploid cells. Crotonylation marks active promoters and enhancers and confers resistance to transcriptional repressors. It is also associated with post-meiotically activated genes on autosomes. Lactylated in macrophages by EP300/P300 by using lactoyl-CoA directly derived from endogenous or exogenous lactate, leading to stimulates gene transcription.

It localises to the nucleus. It is found in the chromosome. Functionally, core component of nucleosome. Nucleosomes wrap and compact DNA into chromatin, limiting DNA accessibility to the cellular machineries which require DNA as a template. Histones thereby play a central role in transcription regulation, DNA repair, DNA replication and chromosomal stability. DNA accessibility is regulated via a complex set of post-translational modifications of histones, also called histone code, and nucleosome remodeling. The polypeptide is Histone H2B type 3-B (Homo sapiens (Human)).